A 424-amino-acid chain; its full sequence is Double homeobox protein 4-like protein 2 (424 aa).

Positions 1–10 are enriched in polar residues; the sequence is MALPTPSDST. Disordered stretches follow at residues 1 to 24, 72 to 102, 148 to 167, 218 to 362, and 388 to 414; these read MALPTPSDSTLPAEARGRGRRRRL, SRQLRQHRRESRPWPGRRGPPEGRRKRTAVT, RHPGQGGRAPAQAGGLCSAA, LQPS…LQEP, and QPLLETEAPGELEASEEAASLEAPLSE. 2 consecutive DNA-binding regions (homeobox) follow at residues 19–78 and 94–153; these read GRRR…LRQH and GRRK…PGQG. Residues 265–274 are compositionally biased toward basic and acidic residues; that stretch reads KSREDRDPQR. Composition is skewed to low complexity over residues 278–302 and 319–329; these read PGPCAVAQPGPAQAGPQGQGVLAPP and AGAAWEPQAGA.

The protein resides in the nucleus. In terms of biological role, may be involved in transcriptional regulation. The chain is Double homeobox protein 4-like protein 2 (DUX4L2) from Homo sapiens (Human).